The following is a 459-amino-acid chain: FAD-dependent monooxygenase CTB5 (459 aa).

Residues 10–187 (SDLHPSCIAL…TAVTLKAFEQ (178 aa)) enclose the FAD-binding PCMH-type domain.

The protein belongs to the oxygen-dependent FAD-linked oxidoreductase family.

It functions in the pathway mycotoxin biosynthesis. Functionally, FAD-dependent monooxygenase; part of the gene cluster that mediates the biosynthesis of cercosporin, a light-activated, non-host-selective toxin. The perylenequinone chromophore of cercosporin absorbs light energy to attain an electronically-activated triplet state and produces active oxygen species such as the hydroxyl radical, superoxide, hydrogen peroxide or singlet oxygen upon reaction with oxygen molecules. These reactive oxygen species cause damage to various cellular components including lipids, proteins and nucleic acids. The first step of cercosporin biosynthesis is performed by the polyketide synthase CTB1 which catalyzes the formation of nor-toralactone. The starter unit acyltransferase (SAT) domain of CTB1 initiates polyketide extension by the selective utilization of acetyl-CoA, which is elongated to the heptaketide in the beta-ketoacyl synthase (KS) domain by successive condensations with six malonyl units introduced by the malonyl acyltransferase (MAT) domain. The product template (PT) domain catalyzes C4-C9 and C2-C11 aldol cyclizations and dehydrations to a trihydroxynaphthalene, which is thought to be delivered to the thioesterase (TE) domain for product release. The bifunctional enzyme CTB3 then methylates nor-toralactone to toralactone before conducting an unusual oxidative aromatic ring opening. The O-methyltransferase CTB2 further methylates the nascent OH-6 of the CBT3 product, blocking further oxidation at this site before the reductase CTB6 reduces the 2-oxopropyl ketone at position C7, giving naphthalene. The FAD-dependent monooxygenase CTB5 in concert with the multicopper oxidase CTB12 are responsible for homodimerization of naphthalene with CTB7 installing the dioxepine moiety, finally producing cercosporin. The fasciclin domain-containing protein CTB11 might act with CTB5 and CTB12 whereas the roles of CTB9 and CTB10 have still to be elucidated. The sequence is that of FAD-dependent monooxygenase CTB5 from Cercospora nicotianae (Barn spot disease fungus).